Consider the following 288-residue polypeptide: Transmembrane and coiled-coil domain-containing protein 5A (288 aa).

A coiled-coil region spans residues 10-192; it reads KRNIISLNMD…ALFLEREVSK (183 aa). A helical membrane pass occupies residues 224 to 244; it reads IFCCLFFITLFFIRLLSYMFF.

Belongs to the TMCO5 family.

The protein resides in the endoplasmic reticulum membrane. It localises to the nucleus membrane. The protein is Transmembrane and coiled-coil domain-containing protein 5A (TMCO5A) of Homo sapiens (Human).